The chain runs to 261 residues: Fructoselysine 6-kinase (261 aa).

It belongs to the carbohydrate kinase PfkB family. Monomer.

The enzyme catalyses N(6)-(D-fructosyl)-L-lysine + ATP = N(6)-(6-phospho-D-fructosyl)-L-lysine + ADP + H(+). It functions in the pathway carbohydrate metabolism; fructoselysine degradation; D-glucose 6-phosphate and lysine from fructoselysine: step 1/2. Its function is as follows. Catalyzes the ATP-dependent phosphorylation of fructoselysine to fructoselysine 6-phosphate. May function in a fructoselysine degradation pathway that allows S.flexneri to grow on fructoselysine or psicoselysine. The protein is Fructoselysine 6-kinase (frlD) of Shigella flexneri.